Consider the following 206-residue polypeptide: Flavin reductase (NADPH) (206 aa).

7 residues coordinate NADP(+): G10, T12, G13, T15, R35, S38, and R39. Position 42 is a phosphoserine (S42). NADP(+) contacts are provided by D54, V55, L75, and G76. Position 82 is a phosphoserine (S82). M87, C109, H132, H153, and I154 together coordinate NADP(+). C109 acts as the S-nitroso-cysteine intermediate; for S-nitroso-CoA-dependent nitrosyltransferase activity in catalysis. Residue C188 is the S-nitroso-cysteine intermediate; for S-nitroso-CoA-dependent nitrosyltransferase activity of the active site.

It belongs to the BLVRB family. In terms of assembly, monomer.

The protein localises to the cytoplasm. It catalyses the reaction reduced riboflavin + NADP(+) = riboflavin + NADPH + 2 H(+). The catalysed reaction is bilirubin IXbeta + NADP(+) = biliverdin IXbeta + NADPH + H(+). The enzyme catalyses FMNH2 + NAD(+) = FMN + NADH + 2 H(+). It carries out the reaction FMNH2 + NADP(+) = FMN + NADPH + 2 H(+). It catalyses the reaction S-nitroso-CoA + L-cysteinyl-[protein] = S-nitroso-L-cysteinyl-[protein] + CoA. The catalysed reaction is L-cysteinyl-[SCAN] + S-nitroso-CoA = S-nitroso-L-cysteinyl-[SCAN] + CoA. The enzyme catalyses S-nitroso-L-cysteinyl-[SCAN] + L-cysteinyl-[protein] = L-cysteinyl-[SCAN] + S-nitroso-L-cysteinyl-[protein]. Functionally, enzyme that can both act as a NAD(P)H-dependent reductase and a S-nitroso-CoA-dependent nitrosyltransferase. Promotes fetal heme degradation during development. Also expressed in adult tissues, where it acts as a regulator of hematopoiesis, intermediary metabolism (glutaminolysis, glycolysis, TCA cycle and pentose phosphate pathway) and insulin signaling. Has a broad specificity oxidoreductase activity by catalyzing the NAD(P)H-dependent reduction of a variety of flavins, such as riboflavin, FAD or FMN, biliverdins, methemoglobin and PQQ (pyrroloquinoline quinone). Contributes to fetal heme catabolism by catalyzing reduction of biliverdin IXbeta into bilirubin IXbeta in the liver. Biliverdin IXbeta, which constitutes the major heme catabolite in the fetus is not present in adult. Does not reduce bilirubin IXalpha. Can also reduce the complexed Fe(3+) iron to Fe(2+) in the presence of FMN and NADPH. Acts as a protein nitrosyltransferase by catalyzing nitrosylation of cysteine residues of target proteins, such as HMOX2, INSR and IRS1. S-nitroso-CoA-dependent nitrosyltransferase activity is mediated via a 'ping-pong' mechanism: BLVRB first associates with both S-nitroso-CoA and protein substrate, nitric oxide group is then transferred from S-nitroso-CoA to Cys-109 and Cys-188 residues of BLVRB and from S-nitroso-BLVRB to the protein substrate. Inhibits insulin signaling by mediating nitrosylation of INSR and IRS1, leading to their inhibition. The polypeptide is Flavin reductase (NADPH) (Blvrb) (Mus musculus (Mouse)).